Here is a 592-residue protein sequence, read N- to C-terminus: Aspartate--tRNA ligase (592 aa).

Glutamate 173 is an L-aspartate binding site. Positions 197-200 (QLFK) are aspartate. Arginine 219 serves as a coordination point for L-aspartate. ATP contacts are provided by residues 219–221 (RDE) and glutamine 228. Residue histidine 448 participates in L-aspartate binding. Position 482 (glutamate 482) interacts with ATP. Position 489 (arginine 489) interacts with L-aspartate. 534–537 (GLDR) lines the ATP pocket.

This sequence belongs to the class-II aminoacyl-tRNA synthetase family. Type 1 subfamily. Homodimer.

It localises to the cytoplasm. It catalyses the reaction tRNA(Asp) + L-aspartate + ATP = L-aspartyl-tRNA(Asp) + AMP + diphosphate. Functionally, catalyzes the attachment of L-aspartate to tRNA(Asp) in a two-step reaction: L-aspartate is first activated by ATP to form Asp-AMP and then transferred to the acceptor end of tRNA(Asp). The sequence is that of Aspartate--tRNA ligase from Shewanella baltica (strain OS223).